The sequence spans 404 residues: Glucose-1-phosphate adenylyltransferase (404 aa).

Alpha-D-glucose 1-phosphate is bound by residues Tyr-99, Gly-164, 179–180 (EK), and Ser-197.

The protein belongs to the bacterial/plant glucose-1-phosphate adenylyltransferase family.

The catalysed reaction is alpha-D-glucose 1-phosphate + ATP + H(+) = ADP-alpha-D-glucose + diphosphate. Its pathway is glycan biosynthesis; glycogen biosynthesis. Functionally, involved in the biosynthesis of ADP-glucose, a building block, required in the biosynthesis of maltose-1-phosphate (M1P) and in the elongation reactions to produce linear alpha-1,4-glucans. Catalyzes the reaction between ATP and alpha-D-glucose 1-phosphate (G1P) to produce pyrophosphate and ADP-Glc. This chain is Glucose-1-phosphate adenylyltransferase, found in Mycolicibacterium vanbaalenii (strain DSM 7251 / JCM 13017 / BCRC 16820 / KCTC 9966 / NRRL B-24157 / PYR-1) (Mycobacterium vanbaalenii).